Reading from the N-terminus, the 185-residue chain is Heavy metal-associated isoprenylated plant protein 11 (185 aa).

One can recognise an HMA domain in the interval 39 to 106 (QQNTNVVFKL…ICKHVAIIAA (68 aa)). The segment covering 109 to 158 (IREPEQNRNPVTRREPNREPEQNRSRVTRREPSREPEPNRAPLARRESRP) has biased composition (basic and acidic residues). The interval 109-185 (IREPEQNRNP…GENSDGCIIM (77 aa)) is disordered. Cysteine 182 bears the Cysteine methyl ester mark. The S-farnesyl cysteine moiety is linked to residue cysteine 182. Positions 183–185 (IIM) are cleaved as a propeptide — removed in mature form.

The protein belongs to the HIPP family.

Its function is as follows. Probable heavy-metal-binding protein. This is Heavy metal-associated isoprenylated plant protein 11 from Arabidopsis thaliana (Mouse-ear cress).